The following is an 89-amino-acid chain: Small ribosomal subunit protein uS17 (89 aa).

This sequence belongs to the universal ribosomal protein uS17 family. Part of the 30S ribosomal subunit.

One of the primary rRNA binding proteins, it binds specifically to the 5'-end of 16S ribosomal RNA. In Chlorobium phaeobacteroides (strain BS1), this protein is Small ribosomal subunit protein uS17.